A 149-amino-acid chain; its full sequence is Transcriptional regulator MraZ (149 aa).

SpoVT-AbrB domains are found at residues 9–52 (AYSY…PRAQ) and 82–125 (AQEV…DRAR).

Belongs to the MraZ family. In terms of assembly, forms oligomers.

Its subcellular location is the cytoplasm. It is found in the nucleoid. This chain is Transcriptional regulator MraZ, found in Treponema pallidum subsp. pallidum (strain SS14).